The primary structure comprises 403 residues: Argininosuccinate synthase (403 aa).

ATP is bound by residues 12-20 (AYSGGLDTS) and alanine 39. L-citrulline is bound by residues tyrosine 90 and serine 95. Position 120 (glycine 120) interacts with ATP. L-aspartate contacts are provided by threonine 122, asparagine 126, and aspartate 127. Asparagine 126 contributes to the L-citrulline binding site. The L-citrulline site is built by arginine 130, serine 182, serine 191, glutamate 267, and tyrosine 279.

Belongs to the argininosuccinate synthase family. Type 1 subfamily. In terms of assembly, homotetramer.

The protein localises to the cytoplasm. It carries out the reaction L-citrulline + L-aspartate + ATP = 2-(N(omega)-L-arginino)succinate + AMP + diphosphate + H(+). The protein operates within amino-acid biosynthesis; L-arginine biosynthesis; L-arginine from L-ornithine and carbamoyl phosphate: step 2/3. This Vesicomyosocius okutanii subsp. Calyptogena okutanii (strain HA) protein is Argininosuccinate synthase.